The following is a 159-amino-acid chain: Regulatory protein RecX (159 aa).

The protein belongs to the RecX family.

The protein localises to the cytoplasm. Modulates RecA activity. This Acinetobacter baylyi (strain ATCC 33305 / BD413 / ADP1) protein is Regulatory protein RecX.